The following is a 261-amino-acid chain: High-affinity zinc uptake system membrane protein ZnuB (261 aa).

7 helical membrane-spanning segments follow: residues 8 to 28 (GWLA…FIIW), 54 to 74 (IDSF…LVWM), 84 to 104 (TILS…ISLM), 129 to 149 (CIIA…WNSI), 179 to 199 (ICIS…LLII), 215 to 235 (IGFS…LSFF), and 238 to 254 (VPTS…VYLL).

The protein belongs to the ABC-3 integral membrane protein family.

The protein resides in the cell membrane. In terms of biological role, involved in the high-affinity zinc uptake transport system. This chain is High-affinity zinc uptake system membrane protein ZnuB (znuB), found in Buchnera aphidicola subsp. Schizaphis graminum (strain Sg).